Here is a 741-residue protein sequence, read N- to C-terminus: NAD(P)H-quinone oxidoreductase subunit 5, chloroplastic (741 aa).

14 helical membrane passes run 9–29 (WIIP…LLLV), 40–60 (WAFP…DLSI), 89–109 (IDPL…MVLI), 122–139 (LRFF…LGLV), 147–167 (IHIF…FWFT), 185–205 (GDFG…SLEF), 219–239 (NGVN…GAVA), 258–278 (TPIS…FLVA), 280–300 (LLPI…LGII), 396–416 (TTFL…CFWS), 425–445 (WLYS…TAFY), 544–564 (LFPL…GIPF), 603–623 (IYSV…YGSV), and 719–739 (YLFV…FYFL).

Belongs to the complex I subunit 5 family. In terms of assembly, NDH is composed of at least 16 different subunits, 5 of which are encoded in the nucleus.

The protein resides in the plastid. The protein localises to the chloroplast thylakoid membrane. The enzyme catalyses a plastoquinone + NADH + (n+1) H(+)(in) = a plastoquinol + NAD(+) + n H(+)(out). It catalyses the reaction a plastoquinone + NADPH + (n+1) H(+)(in) = a plastoquinol + NADP(+) + n H(+)(out). NDH shuttles electrons from NAD(P)H:plastoquinone, via FMN and iron-sulfur (Fe-S) centers, to quinones in the photosynthetic chain and possibly in a chloroplast respiratory chain. The immediate electron acceptor for the enzyme in this species is believed to be plastoquinone. Couples the redox reaction to proton translocation, and thus conserves the redox energy in a proton gradient. The protein is NAD(P)H-quinone oxidoreductase subunit 5, chloroplastic (ndhF) of Liriodendron tulipifera (Tuliptree).